Reading from the N-terminus, the 504-residue chain is Signal transduction histidine-protein kinase/phosphatase MprB (504 aa).

At 1–26 (MWWFRRRDRAPLRATSSLSLRWRVML) the chain is on the cytoplasmic side. Residues 27 to 47 (LAMSMVAMVVVLMSFAVYAVI) traverse the membrane as a helical segment. The Extracellular portion of the chain corresponds to 48 to 163 (SAALYSDIDN…PTEAVMNKLR (116 aa)). A helical transmembrane segment spans residues 164-184 (WVLLIVGGIGVAVAAVAGGMV). Over 185 to 504 (TRAGLRPVGR…SVESQSTRAT (320 aa)) the chain is Cytoplasmic. An HAMP domain is found at 186-238 (RAGLRPVGRLTEAAERVARTDDLRPIPVFGSDELARLTEAFNLMLRALAESRE). In terms of domain architecture, Histidine kinase spans 246–466 (DAGHELRTPL…SIYVLLPGRR (221 aa)). His-249 carries the phosphohistidine; by autocatalysis modification. The segment at 471 to 504 (QLPGATAGARSTDIENSRGSANVISVESQSTRAT) is disordered. Residues 487 to 504 (SRGSANVISVESQSTRAT) show a composition bias toward polar residues.

Mg(2+) serves as cofactor. Mn(2+) is required as a cofactor. Post-translationally, autophosphorylated.

The protein localises to the cell membrane. The catalysed reaction is ATP + protein L-histidine = ADP + protein N-phospho-L-histidine.. Functionally, member of the two-component regulatory system MprB/MprA which contributes to maintaining a balance among several systems involved in stress resistance and is required for establishment and maintenance of persistent infection in the host. In response to environmental signals MprB acts both as a membrane-associated protein kinase that undergoes autophosphorylation and subsequently transfers the phosphate to MprA, and a protein phosphatase that dephosphorylates phospho-MprA. MprB/MprA up-regulates expression of mprA and pepD. This is Signal transduction histidine-protein kinase/phosphatase MprB (mprB) from Mycobacterium bovis (strain ATCC BAA-935 / AF2122/97).